The following is an 814-amino-acid chain: Putative serine/threonine-protein kinase-like protein CCR3 (814 aa).

An N-terminal signal peptide occupies residues 1–30; that stretch reads MKRFINSTVTFSVTVTIAVIIFFLLSPVTS. Asn6, Asn68, Asn136, Asn215, Asn226, Asn251, Asn260, Asn275, Asn299, and Asn309 each carry an N-linked (GlcNAc...) asparagine glycan. The Extracellular portion of the chain corresponds to 31–393; sequence LGSGSTYAVV…SSPPSKALTR (363 aa). Residues 366-381 show a composition bias toward pro residues; that stretch reads SQFPLPPPPPPPPPSP. The segment at 366-388 is disordered; it reads SQFPLPPPPPPPPPSPSTSSPPS. Residues 394-414 traverse the membrane as a helical segment; that stretch reads GLLAFAIVGSVGAFAGICSVV. The Cytoplasmic portion of the chain corresponds to 415 to 814; it reads YCLWTGVCLG…SSGICSIVSD (400 aa). The segment at 433–478 is disordered; that stretch reads QPTITRGGSNSRSNSSNSRSLSIRRQGSRMLSMRRQRSGTSSMKHA. Low complexity predominate over residues 441-457; it reads SNSRSNSSNSRSLSIRR. Residues 496–794 form the Protein kinase domain; it reads FSLENKIGSG…DIVGNLERAL (299 aa). Residues 502 to 510 and Lys524 contribute to the ATP site; that span reads IGSGSFGVV. Catalysis depends on Asp631, which acts as the Proton acceptor.

The protein belongs to the protein kinase superfamily. Ser/Thr protein kinase family. As to quaternary structure, homodimer. As to expression, expressed in roots, leaves, shoot apical meristems (SAM), and floral buds.

Its subcellular location is the membrane. It carries out the reaction L-seryl-[protein] + ATP = O-phospho-L-seryl-[protein] + ADP + H(+). The enzyme catalyses L-threonyl-[protein] + ATP = O-phospho-L-threonyl-[protein] + ADP + H(+). Its function is as follows. Serine/threonine-protein kinase. This Arabidopsis thaliana (Mouse-ear cress) protein is Putative serine/threonine-protein kinase-like protein CCR3 (CCR3).